The following is a 452-amino-acid chain: Probable phosphoglucosamine mutase (452 aa).

Residue Ser-101 is the Phosphoserine intermediate of the active site. The Mg(2+) site is built by Ser-101, Asp-242, Asp-244, and Asp-246. At Ser-101 the chain carries Phosphoserine.

This sequence belongs to the phosphohexose mutase family. Requires Mg(2+) as cofactor. In terms of processing, activated by phosphorylation.

The enzyme catalyses alpha-D-glucosamine 1-phosphate = D-glucosamine 6-phosphate. Its function is as follows. Catalyzes the conversion of glucosamine-6-phosphate to glucosamine-1-phosphate. The protein is Probable phosphoglucosamine mutase of Methanosphaera stadtmanae (strain ATCC 43021 / DSM 3091 / JCM 11832 / MCB-3).